The chain runs to 304 residues: Acetyl-coenzyme A carboxylase carboxyl transferase subunit beta (304 aa).

The CoA carboxyltransferase N-terminal domain maps to 29–298 (LWTKCVSCAA…QAYRPSPQAS (270 aa)). Zn(2+) contacts are provided by cysteine 33, cysteine 36, cysteine 52, and cysteine 55. Residues 33 to 55 (CVSCAALHYTKDFQLNLCVCPAC) form a C4-type zinc finger.

This sequence belongs to the AccD/PCCB family. In terms of assembly, acetyl-CoA carboxylase is a heterohexamer composed of biotin carboxyl carrier protein (AccB), biotin carboxylase (AccC) and two subunits each of ACCase subunit alpha (AccA) and ACCase subunit beta (AccD). It depends on Zn(2+) as a cofactor.

The protein resides in the cytoplasm. The enzyme catalyses N(6)-carboxybiotinyl-L-lysyl-[protein] + acetyl-CoA = N(6)-biotinyl-L-lysyl-[protein] + malonyl-CoA. It participates in lipid metabolism; malonyl-CoA biosynthesis; malonyl-CoA from acetyl-CoA: step 1/1. In terms of biological role, component of the acetyl coenzyme A carboxylase (ACC) complex. Biotin carboxylase (BC) catalyzes the carboxylation of biotin on its carrier protein (BCCP) and then the CO(2) group is transferred by the transcarboxylase to acetyl-CoA to form malonyl-CoA. The chain is Acetyl-coenzyme A carboxylase carboxyl transferase subunit beta from Gloeobacter violaceus (strain ATCC 29082 / PCC 7421).